Here is a 124-residue protein sequence, read N- to C-terminus: Protein TAR1 (124 aa).

The tract at residues 80 to 124 is disordered; it reads KNRTPRHTGFSPSMTSCSKEHRQGTAPKLPSPNYNSGTEGTRFQI. The segment covering 111–124 has biased composition (polar residues); the sequence is PNYNSGTEGTRFQI.

It localises to the mitochondrion. Functionally, may be involved in mtDNA stability or mitochondrial gene expression regulation at the post-transcriptional level. In Saccharomyces cerevisiae (strain ATCC 204508 / S288c) (Baker's yeast), this protein is Protein TAR1 (TAR1).